A 771-amino-acid chain; its full sequence is 5-methyltetrahydropteroyltriglutamate--homocysteine methyltransferase (771 aa).

Residues 13 to 16 (RELK) and K128 each bind 5-methyltetrahydropteroyltri-L-glutamate. L-homocysteine contacts are provided by residues 451 to 453 (IGS) and E504. Residues 451-453 (IGS) and E504 contribute to the L-methionine site. Residues 535–536 (RC) and W581 each bind 5-methyltetrahydropteroyltri-L-glutamate. Position 619 (D619) interacts with L-homocysteine. Residue D619 participates in L-methionine binding. E625 lines the 5-methyltetrahydropteroyltri-L-glutamate pocket. The Zn(2+) site is built by H661, C663, and E685. The active-site Proton donor is H714. Residue C746 coordinates Zn(2+).

Belongs to the vitamin-B12 independent methionine synthase family. Zn(2+) is required as a cofactor.

The catalysed reaction is 5-methyltetrahydropteroyltri-L-glutamate + L-homocysteine = tetrahydropteroyltri-L-glutamate + L-methionine. It participates in amino-acid biosynthesis; L-methionine biosynthesis via de novo pathway; L-methionine from L-homocysteine (MetE route): step 1/1. Its function is as follows. Catalyzes the transfer of a methyl group from 5-methyltetrahydrofolate to homocysteine resulting in methionine formation. The protein is 5-methyltetrahydropteroyltriglutamate--homocysteine methyltransferase of Nitrobacter winogradskyi (strain ATCC 25391 / DSM 10237 / CIP 104748 / NCIMB 11846 / Nb-255).